Consider the following 490-residue polypeptide: tRNA-guanine(15) transglycosylase (490 aa).

Asp-90 acts as the Nucleophile in catalysis. Residues Asp-125 and Ala-193 each coordinate substrate. Zn(2+) is bound by residues Cys-276, Cys-278, and Cys-281.

Belongs to the archaeosine tRNA-ribosyltransferase family. Requires Zn(2+) as cofactor.

It catalyses the reaction guanosine(15) in tRNA + 7-cyano-7-deazaguanine = 7-cyano-7-carbaguanosine(15) in tRNA + guanine. It participates in tRNA modification; archaeosine-tRNA biosynthesis. Exchanges the guanine residue with 7-cyano-7-deazaguanine (preQ0) at position 15 in the dihydrouridine loop (D-loop) of archaeal tRNAs. This is tRNA-guanine(15) transglycosylase from Methanosarcina barkeri (strain Fusaro / DSM 804).